The primary structure comprises 306 residues: Mitochondrial substrate carrier family protein M (306 aa).

Topologically, residues 1–10 (MRYILNNNVE) are mitochondrial intermembrane. Solcar repeat units follow at residues 5–98 (LNNN…YKNI), 108–195 (LNTF…IKFY), and 207–299 (LNAS…IKKS). A helical membrane pass occupies residues 11–31 (GTSALLGSTVATAFLQPFDFL). Over 32 to 72 (KIRLQGSGFASGGDLNKFKRVGVIDTCKNVLKNEGIKQFWR) the chain is Mitochondrial matrix. Residues 73-89 (GSSPTIVASGIAWGTYM) form a helical membrane-spanning segment. Topologically, residues 90–113 (HFYEAYKNILKSKYNVTQLNTFDH) are mitochondrial intermembrane. Residues 114–134 (FICAVGASATQVFITNPIFLI) form a helical membrane-spanning segment. The Mitochondrial matrix portion of the chain corresponds to 135-163 (KTRMQLQTPGSANYYTGIFDGIKKTVKVE). A helical membrane pass occupies residues 164-184 (GFKGLYKGVIPSLWLTFHGGI). Residues 185 to 211 (QMSSYEHIKFYFSSNSGKSLDSLNASE) lie on the Mitochondrial intermembrane side of the membrane. The chain crosses the membrane as a helical span at residues 212–232 (IFIASSISKFLASTILYPFQV). Over 233-278 (VKTRLQDERNIPNQNNVRVYNGTKDVIFKILKNEGIIGFYRGLVPN) the chain is Mitochondrial matrix. The helical transmembrane segment at 279–296 (TLKVIPNTSITLLLYEEI) threads the bilayer. Residues 297–306 (KKSFNYIINE) lie on the Mitochondrial intermembrane side of the membrane.

It belongs to the mitochondrial carrier (TC 2.A.29) family.

The protein localises to the mitochondrion inner membrane. Functionally, mitochondrial solute carriers shuttle metabolites, nucleotides, and cofactors through the mitochondrial inner membrane. Transports folate across the inner membranes of mitochondria. The chain is Mitochondrial substrate carrier family protein M (mcfM) from Dictyostelium discoideum (Social amoeba).